A 952-amino-acid polypeptide reads, in one-letter code: Probable mixed-linked glucan synthase 6 (952 aa).

A run of 2 helical transmembrane segments spans residues 102–122 (LLHP…LFVI) and 132–152 (AMWL…SWLL). D227 is a catalytic residue. Residues 278-308 (EEFVNDRRRVRKEYDDFKARINGLEHDIKQR) adopt a coiled-coil conformation. Substrate contacts are provided by D429 and D431. D636 is an active-site residue. Transmembrane regions (helical) follow at residues 718-738 (LFLI…HFIV), 744-764 (MFYV…VLEV), 782-802 (MTAS…KVVF), 834-854 (WLMI…AVAF), 865-885 (WLKV…LYPF), and 898-918 (VVVL…YINI).

It belongs to the glycosyltransferase 2 family. Plant cellulose synthase-like F subfamily.

The protein localises to the golgi apparatus membrane. In terms of biological role, may catalyze both beta-1,3 and beta-1,4 glycosidic linkage on beta-D-glucan. Essential for (1,3;1,4)-beta-D-glucans synthesis in grasses and cereals (Poaceae). The mixed-linked glucans (which are not present in walls of dicotyledons or most other monocotyledonous plants) are particularly important constituents of the walls of the starchy endosperm and aleurone cells of cereal grains such as oats, wheat, rice and barley. They can account for up to 70% by weight of the wall. This chain is Probable mixed-linked glucan synthase 6 (CSLF6), found in Oryza sativa subsp. japonica (Rice).